The following is a 205-amino-acid chain: Phosphoserine phosphatase ThrH (205 aa).

Residue D7 is the Nucleophile of the active site. Mg(2+) contacts are provided by D7 and E9. E9 functions as the Proton donor in the catalytic mechanism. Substrate-binding positions include E15, R46, 90-91 (SD), and K133. D152 serves as a coordination point for Mg(2+). Residue N155 participates in substrate binding.

This sequence belongs to the thrH family. Mg(2+) is required as a cofactor.

The enzyme catalyses O-phospho-L-serine + H2O = L-serine + phosphate. The catalysed reaction is O-phospho-D-serine + H2O = D-serine + phosphate. It participates in amino-acid biosynthesis; L-serine biosynthesis; L-serine from 3-phospho-D-glycerate: step 3/3. In terms of biological role, phosphoserine phosphatase that mediates dephosphorylation of phosphoserine in the serine biosynthesis pathway. Also able to dephosphorylate other substrates such as phospho-L(or D)-threonine, with lower activity. Shows phosphoserine:homoserine phosphotransferase activity by transferring the phosphoryl group to homoserine using phosphoserine as the phosphoryl group donor. This Pseudomonas aeruginosa (strain ATCC 15692 / DSM 22644 / CIP 104116 / JCM 14847 / LMG 12228 / 1C / PRS 101 / PAO1) protein is Phosphoserine phosphatase ThrH (thrH).